We begin with the raw amino-acid sequence, 153 residues long: Myosin regulatory light chain LC-2, mantle muscle (153 aa).

Ala-1 carries the post-translational modification Blocked amino end (Ala). EF-hand domains follow at residues 13 to 48 (RQMQ…LGRV) and 82 to 117 (DPED…MGDN). 4 residues coordinate Ca(2+): Asp-26, Asp-28, Asp-30, and Asp-37.

Functionally, in molluscan muscle, calcium regulation is associated with myosin rather than with actin. Muscle myosin contains two types of light chains: the catalytic light chain, essential for ATPase activity, and the regulatory light chain, a calcium-binding protein responsible for Ca(2+) dependent binding and Ca(2+) dependent Mg-ATPase activity. The protein is Myosin regulatory light chain LC-2, mantle muscle of Todarodes pacificus (Japanese flying squid).